Reading from the N-terminus, the 726-residue chain is WD repeat and coiled-coil-containing protein (726 aa).

WD repeat units lie at residues 55-98 (GQFE…SDKN) and 154-194 (KSSG…LNAC). Residues 502 to 574 (RSYDGDQSPT…PNFIQPSDVS (73 aa)) are disordered. The segment covering 506 to 515 (GDQSPTSSAN) has biased composition (polar residues). Over residues 517–533 (FDEKRNRLRMESFDTEP) the composition is skewed to basic and acidic residues. The segment covering 550 to 574 (SGSTSPKSECQNSSPPNFIQPSDVS) has biased composition (polar residues). A coiled-coil region spans residues 581–609 (SISRNVERLCCNFAHLQQHLSELTDITRN).

The sequence is that of WD repeat and coiled-coil-containing protein (wdcp) from Xenopus laevis (African clawed frog).